Consider the following 230-residue polypeptide: UPF0688 protein C1orf174 homolog (230 aa).

2 disordered regions span residues 1–85 (MRSR…SLPK) and 97–166 (AEDS…VRAS). The segment covering 11–30 (RSSARLRARSYSSASLASAR) has biased composition (low complexity). Residues 31–48 (DVTSSTSAKTTCLASSSH) are compositionally biased toward polar residues. Residues 49–78 (KATDRRTSKKFKYDKGHLVKAELQKLDPKS) are compositionally biased toward basic and acidic residues. Ser180 is subject to Phosphoserine.

Belongs to the UPF0688 family.

Its subcellular location is the nucleus. The sequence is that of UPF0688 protein C1orf174 homolog from Mus musculus (Mouse).